Consider the following 714-residue polypeptide: MEKPRRLRPRARPQCRGLMKVNLGDFQASILGTHTNARLSGAYPGRPPTFPALETRLTFNKVDLEKNPMEPRQQQFSLWYVLVTILAMLAIQTLFVSGHVETIPYSDFKVLLKAGKLKDVAIGEQAISGTFSTEGIDNLLAKQQIEEIRREAKGDHAFSTLRVADPELVQELEAAKVRFVGQPDNKWLSTILSWVVPAVIFFGIWSFLIKRVGGAAGSMMEIGKSKAKVYMQKETGVTFADVAGIDEAKEELSEIVSFLKDPQRYQRLGGKIPKGVLLVGAPGTGKTLLAKAVAGEAGVPFFSMSGSDFVEMFVGVGAARVRDLFKQAETKAPCIIFIDELDALGKTRALNAVGGNEEREQTLNQLLVEMDGFDSNKGVIIMAATNRPEILDPALLRPGRFDRHVALDRPDLKGREQILKVHVKGVVLAPEVDLTKLAGRTPGFAGADLANLVNEAALLAARKSKQMVEMADFDEALDRIVGGLEKKNRVMNPKEKETIAFHEAGHAIVAEHRPLADRVSKVSIIPRGVAALGYTQQTPTEDRYLLKRSELLDRLDVLLGGRIAEQLIFGDVSTGAQNDLQRATDMARQMITQFGMSDQLGLATYENMPNPLFAGTGLMQRERNEYSESTAQMIDAEVRKLLAEASHRVQATLEGQRTKLDALAQLLLEKEVVDRQDLDMFLSAKVTPMPPPKPVANIEESTATGKPDQKTQGT.

The Cytoplasmic portion of the chain corresponds to 1–75 (MEKPRRLRPR…KNPMEPRQQQ (75 aa)). Residues 76–96 (FSLWYVLVTILAMLAIQTLFV) traverse the membrane as a helical segment. Residues 97-188 (SGHVETIPYS…FVGQPDNKWL (92 aa)) lie on the Periplasmic side of the membrane. The chain crosses the membrane as a helical span at residues 189-209 (STILSWVVPAVIFFGIWSFLI). Residues 210-714 (KRVGGAAGSM…GKPDQKTQGT (505 aa)) are Cytoplasmic-facing. 280 to 287 (GAPGTGKT) provides a ligand contact to ATP. Zn(2+) is bound at residue H502. E503 is a catalytic residue. 2 residues coordinate Zn(2+): H506 and D579. The disordered stretch occupies residues 688–714 (PMPPPKPVANIEESTATGKPDQKTQGT). Over residues 699–714 (EESTATGKPDQKTQGT) the composition is skewed to polar residues.

It in the central section; belongs to the AAA ATPase family. The protein in the C-terminal section; belongs to the peptidase M41 family. Homohexamer. The cofactor is Zn(2+).

Its subcellular location is the cell inner membrane. Its function is as follows. Acts as a processive, ATP-dependent zinc metallopeptidase for both cytoplasmic and membrane proteins. Plays a role in the quality control of integral membrane proteins. The sequence is that of ATP-dependent zinc metalloprotease FtsH from Ralstonia pickettii (strain 12J).